The following is a 100-amino-acid chain: NAD(P)H-quinone oxidoreductase subunit 4L, chloroplastic (100 aa).

Helical transmembrane passes span 1-21 (MLEN…YGLT), 30-50 (LMCL…FSSF), and 60-80 (VFAI…LAII).

The protein belongs to the complex I subunit 4L family. NDH is composed of at least 16 different subunits, 5 of which are encoded in the nucleus.

The protein localises to the plastid. The protein resides in the chloroplast thylakoid membrane. It catalyses the reaction a plastoquinone + NADH + (n+1) H(+)(in) = a plastoquinol + NAD(+) + n H(+)(out). The catalysed reaction is a plastoquinone + NADPH + (n+1) H(+)(in) = a plastoquinol + NADP(+) + n H(+)(out). Functionally, NDH shuttles electrons from NAD(P)H:plastoquinone, via FMN and iron-sulfur (Fe-S) centers, to quinones in the photosynthetic chain and possibly in a chloroplast respiratory chain. The immediate electron acceptor for the enzyme in this species is believed to be plastoquinone. Couples the redox reaction to proton translocation, and thus conserves the redox energy in a proton gradient. The polypeptide is NAD(P)H-quinone oxidoreductase subunit 4L, chloroplastic (Staurastrum punctulatum (Green alga)).